The primary structure comprises 441 residues: ATP-dependent protease ATPase subunit HslU (441 aa).

ATP is bound by residues Ile18, Gly60 to Glu65, Asp254, Glu319, and Arg391.

This sequence belongs to the ClpX chaperone family. HslU subfamily. In terms of assembly, a double ring-shaped homohexamer of HslV is capped on each side by a ring-shaped HslU homohexamer. The assembly of the HslU/HslV complex is dependent on binding of ATP.

Its subcellular location is the cytoplasm. Functionally, ATPase subunit of a proteasome-like degradation complex; this subunit has chaperone activity. The binding of ATP and its subsequent hydrolysis by HslU are essential for unfolding of protein substrates subsequently hydrolyzed by HslV. HslU recognizes the N-terminal part of its protein substrates and unfolds these before they are guided to HslV for hydrolysis. This is ATP-dependent protease ATPase subunit HslU from Shewanella sediminis (strain HAW-EB3).